Consider the following 210-residue polypeptide: Frataxin, mitochondrial (210 aa).

Residues 1 to 41 (MWTLGRRAVAGLLASPSPAQAQTLTRVPRPAELAPLCGRRG) constitute a mitochondrion transit peptide.

This sequence belongs to the frataxin family. As to quaternary structure, component of the mitochondrial core iron-sulfur cluster (ISC) complex composed of NFS1, LYRM4, NDUFAB1, ISCU, FXN, and FDX2; this complex is a heterohexamer containing two copies of each monomer. Homodimer. Monomer (probable predominant form). Oligomer. Monomers and polymeric aggregates of &gt;1 MDa have been isolated from mitochondria. A small fraction of heterologous overexpressed recombinant frataxin forms high-molecular weight aggregates that incorporate iron. Interacts with LYRM4. Interacts (via ferrous form) with ISCU; the interaction is possible when both are bound to the dimeric form of the cysteine desulfurase complex (NFS1:LYRM4) and the interaction enhances FXN interaction to the dimeric form of the cysteine desulfurase complex (NFS1:LYRM4). Interacts with FECH; one iron-bound FXN monomer seems to interact with a FECH homodimer. Interacts with SDHA and SDHB. Interacts with ACO2; the interaction is dependent on citrate. Interacts with HSPA9. In terms of assembly, interacts with ACO1. Interacts with ISCU (cytoplasmic form). Processed in two steps by mitochondrial processing peptidase (MPP). MPP first cleaves the precursor to intermediate form and subsequently converts the intermediate to yield frataxin mature form (frataxin(81-210)) which is the predominant form. The additional forms, frataxin(56-210) and frataxin(78-210), seem to be produced when the normal maturation process is impaired; their physiological relevance is unsure. As to expression, expressed in the heart, peripheral blood lymphocytes and dermal fibroblasts.

Its subcellular location is the mitochondrion. It localises to the cytoplasm. The protein localises to the cytosol. The enzyme catalyses 4 Fe(2+) + O2 + 4 H(+) = 4 Fe(3+) + 2 H2O. Functionally, functions as an activator of persulfide transfer to the scaffoding protein ISCU as component of the core iron-sulfur cluster (ISC) assembly complex and participates to the [2Fe-2S] cluster assembly. Accelerates sulfur transfer from NFS1 persulfide intermediate to ISCU and to small thiols such as L-cysteine and glutathione leading to persulfuration of these thiols and ultimately sulfide release. Binds ferrous ion and is released from FXN upon the addition of both L-cysteine and reduced FDX2 during [2Fe-2S] cluster assembly. The core iron-sulfur cluster (ISC) assembly complex is involved in the de novo synthesis of a [2Fe-2S] cluster, the first step of the mitochondrial iron-sulfur protein biogenesis. This process is initiated by the cysteine desulfurase complex (NFS1:LYRM4:NDUFAB1) that produces persulfide which is delivered on the scaffold protein ISCU in a FXN-dependent manner. Then this complex is stabilized by FDX2 which provides reducing equivalents to accomplish the [2Fe-2S] cluster assembly. Finally, the [2Fe-2S] cluster is transferred from ISCU to chaperone proteins, including HSCB, HSPA9 and GLRX5. May play a role in the protection against iron-catalyzed oxidative stress through its ability to catalyze the oxidation of Fe(2+) to Fe(3+); the oligomeric form but not the monomeric form has in vitro ferroxidase activity. May be able to store large amounts of iron in the form of a ferrihydrite mineral by oligomerization; however, the physiological relevance is unsure as reports are conflicting and the function has only been shown using heterologous overexpression systems. May function as an iron chaperone protein that protects the aconitase [4Fe-4S]2+ cluster from disassembly and promotes enzyme reactivation. May play a role as a high affinity iron binding partner for FECH that is capable of both delivering iron to ferrochelatase and mediating the terminal step in mitochondrial heme biosynthesis. Modulates the RNA-binding activity of ACO1. May be involved in the cytoplasmic iron-sulfur protein biogenesis. May contribute to oxidative stress resistance and overall cell survival. This chain is Frataxin, mitochondrial, found in Homo sapiens (Human).